Here is a 326-residue protein sequence, read N- to C-terminus: Glyoxylate/hydroxypyruvate reductase B (326 aa).

Active-site residues include Arg237 and Glu266. Residue His285 is the Proton donor of the active site.

The protein belongs to the D-isomer specific 2-hydroxyacid dehydrogenase family. GhrB subfamily. Homodimer.

It is found in the cytoplasm. It catalyses the reaction glycolate + NADP(+) = glyoxylate + NADPH + H(+). The enzyme catalyses (R)-glycerate + NAD(+) = 3-hydroxypyruvate + NADH + H(+). The catalysed reaction is (R)-glycerate + NADP(+) = 3-hydroxypyruvate + NADPH + H(+). In terms of biological role, catalyzes the NADPH-dependent reduction of glyoxylate and hydroxypyruvate into glycolate and glycerate, respectively. In Yersinia pestis bv. Antiqua (strain Nepal516), this protein is Glyoxylate/hydroxypyruvate reductase B.